The following is a 196-amino-acid chain: Large ribosomal subunit protein bL17 (196 aa).

The interval 133-196 is disordered; sequence AAKRDADKKE…KPAAEEKDAK (64 aa). Residues 134-143 are compositionally biased toward basic and acidic residues; it reads AKRDADKKEA. Residues 152-164 are compositionally biased toward acidic residues; that stretch reads EVAETEAAPEAEA. Basic and acidic residues predominate over residues 184–196; it reads AAEKPAAEEKDAK.

This sequence belongs to the bacterial ribosomal protein bL17 family. As to quaternary structure, part of the 50S ribosomal subunit. Contacts protein L32.

This is Large ribosomal subunit protein bL17 from Arthrobacter sp. (strain FB24).